We begin with the raw amino-acid sequence, 51 residues long: Photosystem I reaction center subunit IX (51 aa).

Residues 17–37 (FFSTAPVIALVFFTLTAGFLV) form a helical membrane-spanning segment.

Belongs to the PsaJ family.

The protein resides in the cellular thylakoid membrane. Functionally, may help in the organization of the PsaE and PsaF subunits. This Acaryochloris marina (strain MBIC 11017) protein is Photosystem I reaction center subunit IX.